Consider the following 236-residue polypeptide: Ribosomal RNA large subunit methyltransferase E (236 aa).

The S-adenosyl-L-methionine site is built by G76, W78, D99, D115, and D140. The active-site Proton acceptor is the K180.

This sequence belongs to the class I-like SAM-binding methyltransferase superfamily. RNA methyltransferase RlmE family.

It localises to the cytoplasm. It catalyses the reaction uridine(2552) in 23S rRNA + S-adenosyl-L-methionine = 2'-O-methyluridine(2552) in 23S rRNA + S-adenosyl-L-homocysteine + H(+). Its function is as follows. Specifically methylates the uridine in position 2552 of 23S rRNA at the 2'-O position of the ribose in the fully assembled 50S ribosomal subunit. In Rhodopseudomonas palustris (strain HaA2), this protein is Ribosomal RNA large subunit methyltransferase E.